The following is a 956-amino-acid chain: MEKPELWGVLALLLLCSYTCGSQDLQVIDLLTVGESRQMVAVAEKIRTALLTAGDIYLLSTFRLPPKQGGVLFGLYSRQDNTRWLEASVVGKINKVLVRYQREDGKVHAVNLQQAGLADGRTHTALLRLRGPSRPSPGLQLYVDCKLGDQHAGLPALAPIPPAEVSGLEIRTGQKAYLRMQGFVESMKIILGGSMARVGALSECPFQGDDSIHNAVTSALQSILGEQTKALVTQLTLFNQILVELRDDIRDQVKEMSLIRNTIMECQVCGFHEQRSHCSPSPCFRGVDCMEVYEYPGYRCGPCPPGLQGNGTHCDDINECAHADPCFPGSSCINTMPGFHCEACPPGYKGTRVSGVGIDYARASKQVCNDIDECNDGNNGGCDPNSICTNTVGSFKCGPCRLGFLGNQSQGCVPARTCHSPAHSPCHIHAHCLFERNGAVSCQCNVGWAGNGNVCGPDTDIDGYPDQALPCMDNNKHCKQDNCLLTPNSGQEDADNDGVGDQCDDDADGDGIKNVEDNCRLFPNKDQQNSDTDSFGDACDNCPNVPNNDQKDTDGNGEGDACDNDVDGDGIPNGLDNCPKVPNPLQTDRDEDGVGDACDSCPEMSNPTQTDADSDLVGDVCDTNEDSDGDGHQDTKDNCPQLPNSSQLDSDNDGLGDECDGDDDNDGVPDYIPPGPDNCRLVPNPNQKDSDGNGVGDVCEDDFDNDAVVDPLDVCPESAEVTLTDFRAYQTVILDPEGDAQIDPNWVVLNQGMEIVQTMNSDPGLAVGYTAFNGVDFEGTFHVNTVTDDDYAGFLFSYQDSGRFYVVMWKQTEQTYWQATPFRAVAQPGLQLKAVTSISGPGEHLRNALWHTGHTPDQVRLLWTDPRNVGWRDKTSYRWRLLHRPQVGYIRVKLYEGPQLVADSGVIIDTSMRGGRLGVFCFSQENIIWSNLQYRCNDTVPEDFEPFRRQLLQGRV.

The signal sequence occupies residues 1 to 21 (MEKPELWGVLALLLLCSYTCG). The region spanning 22–193 (SQDLQVIDLL…VESMKIILGG (172 aa)) is the Laminin G-like domain. Intrachain disulfides connect Cys-278/Cys-289, Cys-283/Cys-300, Cys-303/Cys-314, Cys-320/Cys-332, Cys-326/Cys-341, Cys-344/Cys-368, Cys-374/Cys-388, Cys-382/Cys-397, Cys-400/Cys-412, Cys-418/Cys-432, Cys-426/Cys-442, Cys-444/Cys-455, Cys-471/Cys-478, Cys-483/Cys-503, Cys-519/Cys-539, Cys-542/Cys-562, Cys-578/Cys-598, Cys-601/Cys-621, Cys-639/Cys-659, Cys-679/Cys-699, and Cys-715/Cys-936. N-linked (GlcNAc...) asparagine glycosylation is present at Asn-310. The region spanning 316-354 (DINECAHADPCFPGSSCINTMPGFHCEACPPGYKGTRVS) is the EGF-like 1; calcium-binding domain. The 41-residue stretch at 370-410 (DIDECNDGNNGGCDPNSICTNTVGSFKCGPCRLGFLGNQSQ) folds into the EGF-like 2; calcium-binding domain. Asn-407 carries N-linked (GlcNAc...) asparagine glycosylation. One can recognise an EGF-like 3 domain in the interval 414-456 (PARTCHSPAHSPCHIHAHCLFERNGAVSCQCNVGWAGNGNVCG). TSP type-3 repeat units lie at residues 457–491 (PDTDIDGYPDQALPCMDNNKHCKQDNCLLTPNSGQ), 492–527 (EDADNDGVGDQCDDDADGDGIKNVEDNCRLFPNKDQ), 528–550 (QNSDTDSFGDACDNCPNVPNNDQ), 551–586 (KDTDGNGEGDACDNDVDGDGIPNGLDNCPKVPNPLQ), 587–609 (TDRDEDGVGDACDSCPEMSNPTQ), 610–647 (TDADSDLVGDVCDTNEDSDGDGHQDTKDNCPQLPNSSQ), 648–687 (LDSDNDGLGDECDGDDDNDGVPDYIPPGPDNCRLVPNPNQ), and 688–723 (KDSDGNGVGDVCEDDFDNDAVVDPLDVCPESAEVTL). 2 disordered regions span residues 518 to 537 (NCRLFPNKDQQNSDTDSFGD) and 546 to 699 (PNND…GDVC). Over residues 555–568 (GNGEGDACDNDVDG) the composition is skewed to acidic residues. Residues 612 to 628 (ADSDLVGDVCDTNEDSD) are compositionally biased toward acidic residues. A glycan (N-linked (GlcNAc...) asparagine) is linked at Asn-644. The span at 650–667 (SDNDGLGDECDGDDDNDG) shows a compositional bias: acidic residues. Residues 727 to 941 (RAYQTVILDP…LQYRCNDTVP (215 aa)) enclose the TSP C-terminal domain. N-linked (GlcNAc...) asparagine glycosylation is present at Asn-937.

Belongs to the thrombospondin family. In terms of assembly, oligomer; disulfide-linked. As to expression, brain, lung and cartilage.

Functionally, adhesive glycoprotein that mediates cell-to-cell and cell-to-matrix interactions. Can bind to fibrinogen, fibronectin, laminin and type V collagen. The protein is Thrombospondin-3 (Thbs3) of Mus musculus (Mouse).